The following is a 340-amino-acid chain: Phosphoribosylformylglycinamidine cyclo-ligase (340 aa).

The protein belongs to the AIR synthase family.

The protein resides in the cytoplasm. The enzyme catalyses 2-formamido-N(1)-(5-O-phospho-beta-D-ribosyl)acetamidine + ATP = 5-amino-1-(5-phospho-beta-D-ribosyl)imidazole + ADP + phosphate + H(+). It participates in purine metabolism; IMP biosynthesis via de novo pathway; 5-amino-1-(5-phospho-D-ribosyl)imidazole from N(2)-formyl-N(1)-(5-phospho-D-ribosyl)glycinamide: step 2/2. The chain is Phosphoribosylformylglycinamidine cyclo-ligase from Streptococcus pyogenes serotype M1.